We begin with the raw amino-acid sequence, 836 residues long: Envelope glycoprotein gp160 (836 aa).

The signal sequence occupies residues 1-21 (MGMQSGWPFFCLLISLTIGSD). At 22–656 (PHWVTVYYGV…ITKWLWYIKI (635 aa)) the chain is on the extracellular side. C43 and C63 are oxidised to a cystine. N-linked (GlcNAc...) asparagine; by host glycosylation is found at N77, N121, N130, N134, N146, N150, N180, N189, N224, N228, N233, N254, N276, N282, N288, N318, N328, N340, and N341. Disulfide bonds link C108–C197, C115–C188, C120–C147, C210–C239, and C220–C231. The tract at residues 120-146 (CNNSNGNSAGNSTTNRTEDLEDRQMKN) is V1. The interval 147–188 (CSFNITTEIRDRKKQVYSLFYVEDVVPIKDGTDNNTYRLINC) is V2. The tract at residues 283–316 (CTRPGNNTGGQVQIGPAMTFYNIEKIVGDVRQAY) is V3. C283 and C317 are disulfide-bonded. The interval 349–359 (KNGGDLEVTHL) is CD4-binding loop. Cystine bridges form between C363–C418 and C370–C391. The V4 stretch occupies residues 370 to 391 (CNTSRLFNESENKTNKTIILPC). N-linked (GlcNAc...) asparagine; by host glycans are attached at residues N371, N377, N381, N384, N415, and N435. Residues 434–441 (GNKTVYPS) are V5. The segment at 482–503 (AAFGLGALFLGFLGAAGSTMGA) is fusion peptide. An immunosuppression region spans residues 545 to 563 (KQLRAKVLAIERYLRDQQI). C569 and C575 are joined by a disulfide. N-linked (GlcNAc...) asparagine; by host glycosylation is found at N582, N588, N597, and N609. A coiled-coil region spans residues 605–639 (RKVRNYSGVIFDLIEQAQEQQNTNEKALLELDQWA). An MPER; binding to GalCer region spans residues 634–655 (ELDQWASLWNWFDITKWLWYIK). Residues 657–677 (AIMVVAGIIGIRIISAIITII) traverse the membrane as a helical segment. The Cytoplasmic segment spans residues 678 to 836 (ARVRQGYSPL…IRQGLERALL (159 aa)). Residues 684–687 (YSPL) carry the YXXL motif; contains endocytosis signal motif. Residues 696–715 (AARGPDRPEETEEGVGGQDR) form a disordered region. The Di-leucine internalization motif motif lies at 835 to 836 (LL).

The protein belongs to the HIV-1 env protein family. In terms of assembly, the mature envelope protein (Env) consists of a homotrimer of non-covalently associated gp120-gp41 heterodimers. The resulting complex protrudes from the virus surface as a spike. There seems to be as few as 10 spikes on the average virion. Interacts with host CD4, CCR5 and CXCR4. Gp120 also interacts with the C-type lectins CD209/DC-SIGN and CLEC4M/DC-SIGNR (collectively referred to as DC-SIGN(R)). Gp120 and gp41 interact with GalCer. Gp120 interacts with host ITGA4/ITGB7 complex; on CD4+ T-cells, this interaction results in rapid activation of integrin ITGAL/LFA-1, which facilitates efficient cell-to-cell spreading of HIV-1. Gp120 interacts with cell-associated heparan sulfate; this interaction increases virus infectivity on permissive cells and may be involved in infection of CD4- cells. As to quaternary structure, the mature envelope protein (Env) consists of a homotrimer of non-covalently associated gp120-gp41 heterodimers. The resulting complex protrudes from the virus surface as a spike. There seems to be as few as 10 spikes on the average virion. In terms of processing, highly glycosylated by host. The high number of glycan on the protein is reffered to as 'glycan shield' because it contributes to hide protein sequence from adaptive immune system. Post-translationally, palmitoylation of the transmembrane protein and of Env polyprotein (prior to its proteolytic cleavage) is essential for their association with host cell membrane lipid rafts. Palmitoylation is therefore required for envelope trafficking to classical lipid rafts, but not for viral replication. Specific enzymatic cleavages in vivo yield mature proteins. Envelope glycoproteins are synthesized as an inactive precursor that is heavily N-glycosylated and processed likely by host cell furin in the Golgi to yield the mature SU and TM proteins. The cleavage site between SU and TM requires the minimal sequence [KR]-X-[KR]-R. About 2 of the 9 disulfide bonds of gp41 are reduced by P4HB/PDI, following binding to CD4 receptor.

The protein resides in the virion membrane. It localises to the host cell membrane. It is found in the host endosome membrane. Oligomerizes in the host endoplasmic reticulum into predominantly trimers. In a second time, gp160 transits in the host Golgi, where glycosylation is completed. The precursor is then proteolytically cleaved in the trans-Golgi and thereby activated by cellular furin or furin-like proteases to produce gp120 and gp41. Its function is as follows. Attaches the virus to the host lymphoid cell by binding to the primary receptor CD4. This interaction induces a structural rearrangement creating a high affinity binding site for a chemokine coreceptor like CXCR4 and/or CCR5. Acts as a ligand for CD209/DC-SIGN and CLEC4M/DC-SIGNR, which are respectively found on dendritic cells (DCs), and on endothelial cells of liver sinusoids and lymph node sinuses. These interactions allow capture of viral particles at mucosal surfaces by these cells and subsequent transmission to permissive cells. HIV subverts the migration properties of dendritic cells to gain access to CD4+ T-cells in lymph nodes. Virus transmission to permissive T-cells occurs either in trans (without DCs infection, through viral capture and transmission), or in cis (following DCs productive infection, through the usual CD4-gp120 interaction), thereby inducing a robust infection. In trans infection, bound virions remain infectious over days and it is proposed that they are not degraded, but protected in non-lysosomal acidic organelles within the DCs close to the cell membrane thus contributing to the viral infectious potential during DCs' migration from the periphery to the lymphoid tissues. On arrival at lymphoid tissues, intact virions recycle back to DCs' cell surface allowing virus transmission to CD4+ T-cells. In terms of biological role, acts as a class I viral fusion protein. Under the current model, the protein has at least 3 conformational states: pre-fusion native state, pre-hairpin intermediate state, and post-fusion hairpin state. During fusion of viral and target intracellular membranes, the coiled coil regions (heptad repeats) assume a trimer-of-hairpins structure, positioning the fusion peptide in close proximity to the C-terminal region of the ectodomain. The formation of this structure appears to drive apposition and subsequent fusion of viral and target cell membranes. Complete fusion occurs in host cell endosomes and is dynamin-dependent, however some lipid transfer might occur at the plasma membrane. The virus undergoes clathrin-dependent internalization long before endosomal fusion, thus minimizing the surface exposure of conserved viral epitopes during fusion and reducing the efficacy of inhibitors targeting these epitopes. Membranes fusion leads to delivery of the nucleocapsid into the cytoplasm. The protein is Envelope glycoprotein gp160 of Human immunodeficiency virus type 1 group N (isolate YBF106) (HIV-1).